The chain runs to 159 residues: Cytochrome c-type biogenesis protein CcmE (159 aa).

Residues 1–8 (MNIRRKNR) lie on the Cytoplasmic side of the membrane. Residues 9–29 (LWIACAVLAGLALTIGLVLYA) traverse the membrane as a helical; Signal-anchor for type II membrane protein segment. At 30–159 (LRSNIDLFYT…PASVYKDPAS (130 aa)) the chain is on the periplasmic side. The heme site is built by histidine 130 and tyrosine 134. Over residues 132–147 (ENYTPPEVEKAMEANH) the composition is skewed to basic and acidic residues. Residues 132-159 (ENYTPPEVEKAMEANHRRPASVYKDPAS) are disordered.

This sequence belongs to the CcmE/CycJ family.

The protein resides in the cell inner membrane. Its function is as follows. Heme chaperone required for the biogenesis of c-type cytochromes. Transiently binds heme delivered by CcmC and transfers the heme to apo-cytochromes in a process facilitated by CcmF and CcmH. This Shigella sonnei (strain Ss046) protein is Cytochrome c-type biogenesis protein CcmE.